The primary structure comprises 224 residues: UPF0758 protein CBUD_1789 (224 aa).

The MPN domain occupies 102–224; it reads QLGCTQDAQQ…SFSFAESGLL (123 aa). Zn(2+)-binding residues include His-173, His-175, and Asp-186. Positions 173–186 match the JAMM motif motif; sequence HNHPSGVPDPSQAD.

The protein belongs to the UPF0758 family.

The chain is UPF0758 protein CBUD_1789 from Coxiella burnetii (strain Dugway 5J108-111).